Here is an 800-residue protein sequence, read N- to C-terminus: MSRRRAHDTEDEGYDHRRNKRRRVSENQEIEDRLESLILRVGERSTSSVESNLEGLVSVLEADLGTFRLKILRILSDCAVRMPEKCTVYTTLVGLLNAKNYKFGGEFVDHMVKTFKESLKLCRWDAARYSLRFLADLVNCHVISATSLLQLLDTMIDVSNEDTVPQVRRDWFVFAVLSTLPWVGRDLYEKKESALESLLLRIEVYLNKRSKKHHNALRVWSSDAPHPQEEYLDCLWAQIRKLRQDNWAEKHIPRPYLVFDSILCEALQHNLPQIIPPPHHDAFEYPMPWVVYRMFDYTDCPDGPNLPGAHSIERFLIEEHLHHIIETHHYERKDCAAQLLNFPFKHKIPLEYCIVEVIFAELFHMPTPRYLDICYGSILIELCKLQPGTLPQVLAQATEILFMRIDSMNTSCFDRFVNWFSYHLSNFKFTWSWDEWDSCLLLEAEHPRPKFIQEVLQKCLRLSYHQRITEMMPTTYAKLIPLTPVPNYKYANEEAANLPGTTVAHQLVVAIRQKCTPEEVVNILKEIPSSGYSGEEMSDGSFNALKIDVFVQTLLNLGSKSFSHSFAAISKFHAVFRALAETEEAQICILHNIFELWSSHQQMMVVLIDKLLKLQIVDCSAVATWIFSKEMTGEFTKMYLWEILHLTIKKMNKHVIKLNTELSDAKDKLSKADSSSSDSDEDTPHKRKKPITHADKPSEEVVERMEEKLEAANVNQKRLFLIVFQRFIMILSEHLLRSDTDGRDPDTDWYRWTIGRLQQVFLMHHEQVQKYSSTLETLLFTSDLDTHILEVFQQFVALRA.

The disordered stretch occupies residues 1–26; sequence MSRRRAHDTEDEGYDHRRNKRRRVSE. Residue Thr9 is modified to Phosphothreonine. The MIF4G domain occupies 31–243; it reads EDRLESLILR…CLWAQIRKLR (213 aa). The tract at residues 669–699 is disordered; sequence LSKADSSSSDSDEDTPHKRKKPITHADKPSE.

The protein belongs to the NCBP1 family. As to quaternary structure, component of the nuclear cap-binding complex (CBC), a heterodimer composed of Cbp80 and Cbp20 that interacts with m7GpppG-capped RNA.

The protein localises to the nucleus. Functionally, component of the cap-binding complex (CBC), which binds cotranscriptionally to the 5'-cap of pre-mRNAs and is involved in various processes such as pre-mRNA splicing and RNA-mediated gene silencing (RNAi). The CBC complex is involved in miRNA-mediated RNA interference via its interaction with Ars2 and is required for primary microRNAs (miRNAs) processing. Also involved in innate immunity via the short interfering RNAs (siRNAs) processing machinery by restricting the viral RNA production. In the CBC complex, Cbp80 does not bind directly capped RNAs (m7GpppG-capped RNA) but is required to stabilize the movement of the N-terminal loop of Cbp20 and lock the CBC into a high affinity cap-binding state with the cap structure. This is Nuclear cap-binding protein subunit 1 (Cbp80) from Drosophila willistoni (Fruit fly).